The following is a 461-amino-acid chain: MTLRIYDTAARKKRVFEPQDAKRVTLYVCGPTVYNYAHIGNARPPVVFDVLRRVLMARYGEDAIVYARNITDIEDKIIAASVASGEPISAITQKYAAIYNADVEALNVIAPTIEPWATGHVPEMIEIIEKLIRKKYAYVGDTGVWFSVPSMPDYGRLSGRKPEDNEAGARVAVDEDKRDPSDFALWKFAKPGEPEDAIWDSPWGRGRPGWHIECSAMAAKHLGRTIDIHGGGVDLTFPHHENEIAQSECAHGEELARYWMHNGFLDMGGEKMSKSLGNVVTVHDLLKAWPGEVLRFALLTAHYRAQLDWTEDLLKQAKTTLDRIYGALRRVWEADGGEARDTGVLRALEDDLGTPDALAELARLASEANTAADLKDAVAMANGRANLLAAGKLLGLLTKTPKEWEQGADTDENSRIDAQVQARVDARVAKDWAEADRIRKALAEEGVEIMDGPAGSTWRRI.

Cys29 provides a ligand contact to Zn(2+). Residues 31–41 carry the 'HIGH' region motif; it reads PTVYNYAHIGN. The Zn(2+) site is built by Cys214, His239, and Glu243. The 'KMSKS' region motif lies at 271–275; sequence KMSKS. Lys274 contacts ATP.

The protein belongs to the class-I aminoacyl-tRNA synthetase family. Monomer. Zn(2+) is required as a cofactor.

It is found in the cytoplasm. It catalyses the reaction tRNA(Cys) + L-cysteine + ATP = L-cysteinyl-tRNA(Cys) + AMP + diphosphate. This is Cysteine--tRNA ligase from Hyphomonas neptunium (strain ATCC 15444).